A 125-amino-acid chain; its full sequence is MADLAKIEEQLSSLTLMQAAELVKMLEEKWGVSAAAPVPMAAASAPAAAEEAVAEKTDFEVVLTAVGGKKVEVIKVVREITGLGLIEAKKLVDEAPKAVKQSVKKAEAEEIKSKLEAAGAKVELK.

Belongs to the bacterial ribosomal protein bL12 family. Homodimer. Part of the ribosomal stalk of the 50S ribosomal subunit. Forms a multimeric L10(L12)X complex, where L10 forms an elongated spine to which 2 to 4 L12 dimers bind in a sequential fashion. Binds GTP-bound translation factors.

In terms of biological role, forms part of the ribosomal stalk which helps the ribosome interact with GTP-bound translation factors. Is thus essential for accurate translation. The protein is Large ribosomal subunit protein bL12 of Rickettsia canadensis (strain McKiel).